A 209-amino-acid chain; its full sequence is Ribosomal RNA large subunit methyltransferase E (209 aa).

S-adenosyl-L-methionine-binding residues include Gly-63, Trp-65, Asp-83, Asp-99, and Asp-124. Residue Lys-164 is the Proton acceptor of the active site.

The protein belongs to the class I-like SAM-binding methyltransferase superfamily. RNA methyltransferase RlmE family.

It is found in the cytoplasm. The catalysed reaction is uridine(2552) in 23S rRNA + S-adenosyl-L-methionine = 2'-O-methyluridine(2552) in 23S rRNA + S-adenosyl-L-homocysteine + H(+). Functionally, specifically methylates the uridine in position 2552 of 23S rRNA at the 2'-O position of the ribose in the fully assembled 50S ribosomal subunit. This chain is Ribosomal RNA large subunit methyltransferase E, found in Sodalis glossinidius (strain morsitans).